A 72-amino-acid polypeptide reads, in one-letter code: Large ribosomal subunit protein uL29 (72 aa).

It belongs to the universal ribosomal protein uL29 family.

The sequence is that of Large ribosomal subunit protein uL29 (rpmC) from Treponema pallidum (strain Nichols).